The primary structure comprises 702 residues: Elongation factor G 2 (702 aa).

One can recognise a tr-type G domain in the interval 8–291 (ELYRNIGIVA…AVIDYLPAPS (284 aa)). Residues 17-24 (AHVDAGKT), 89-93 (DTPGH), and 143-146 (NKMD) contribute to the GTP site. The interval 293-314 (IPAIRGTDPDDEEKHDERHADD) is disordered.

Belongs to the TRAFAC class translation factor GTPase superfamily. Classic translation factor GTPase family. EF-G/EF-2 subfamily.

It localises to the cytoplasm. Functionally, catalyzes the GTP-dependent ribosomal translocation step during translation elongation. During this step, the ribosome changes from the pre-translocational (PRE) to the post-translocational (POST) state as the newly formed A-site-bound peptidyl-tRNA and P-site-bound deacylated tRNA move to the P and E sites, respectively. Catalyzes the coordinated movement of the two tRNA molecules, the mRNA and conformational changes in the ribosome. This is Elongation factor G 2 (fusB) from Pseudomonas aeruginosa (strain ATCC 15692 / DSM 22644 / CIP 104116 / JCM 14847 / LMG 12228 / 1C / PRS 101 / PAO1).